The primary structure comprises 123 residues: 13 kDa major membrane protein (123 aa).

It localises to the cell membrane. The protein is 13 kDa major membrane protein of Francisella tularensis subsp. holarctica (strain LVS).